A 590-amino-acid chain; its full sequence is Cationic amino acid transporter 8, vacuolar (590 aa).

At 1–85 (MIPASMEEAH…ESENPMRRCL (85 aa)) the chain is on the cytoplasmic side. The chain crosses the membrane as a helical span at residues 86-106 (TWWDLLWLSFGSVVGSGVFVI). Over 107–114 (TGQEARVG) the chain is Vacuolar. Residues 115 to 135 (AGPAVVLSYAISGVSALLSVL) traverse the membrane as a helical segment. Topologically, residues 136 to 160 (CYAEFGVEIPVAGGSFSYLRVELGD) are cytoplasmic. Residues 161-181 (FIAFIAAGNILLEAMVGAAGL) traverse the membrane as a helical segment. Topologically, residues 182–209 (GRSWSSYLASLVKNDSDYFRIKVDSFAK) are vacuolar. N195 carries an N-linked (GlcNAc...) asparagine glycan. The chain crosses the membrane as a helical span at residues 210 to 230 (GFDLLDPVAVAVLLVANGIAM). The Cytoplasmic segment spans residues 231 to 238 (TGTKRTSW). The helical transmembrane segment at 239 to 259 (LNLITSMVTVCIIVFIVVVGF) threads the bilayer. At 260 to 266 (THSKTSN) the chain is on the vacuolar side. The helical transmembrane segment at 267–287 (LVPFFPYGAKGVVQSAAVVYW) threads the bilayer. Residues 288–310 (SYTGFDMVANMAEETEKPSRDIP) lie on the Cytoplasmic side of the membrane. A helical transmembrane segment spans residues 311–331 (IGLVGSMSMITVVYCLMALAL). The Vacuolar segment spans residues 332–359 (TMMVKYTEIDANAAYSVAFAQIGMKWAK). The helical transmembrane segment at 360 to 380 (YLVGICALKGMTTSLLVGSLG) threads the bilayer. Residues 381–407 (QARYTTQIARSHMIPPWFALVHPKTGT) are Cytoplasmic-facing. The chain crosses the membrane as a helical span at residues 408–428 (PIYATLLVTILSSIISFFTSL). E429 is a topological domain (vacuolar). Residues 430–450 (VLSSVFSFATLFIFMLVAVAL) form a helical membrane-spanning segment. Topologically, residues 451 to 465 (LVRRYYVKDVTPEAG) are cytoplasmic. The helical transmembrane segment at 466–486 (LLKFLGFLFLIIASSIGVSAL) threads the bilayer. At 487-493 (WNSGVKG) the chain is on the vacuolar side. The chain crosses the membrane as a helical span at residues 494-514 (WIAYTVTGVIWFIGTLGLALL). The Cytoplasmic segment spans residues 515 to 522 (PKYRVPKV). Residues 523 to 543 (WGVPLVPWLPSFSIAMNLFLI) form a helical membrane-spanning segment. Over 544-553 (GSLGYVAFLR) the chain is Vacuolar. A helical membrane pass occupies residues 554-574 (FIICTMVMLLYYLFVGLHATY). Residues 575-590 (DVAHQPLEEAKFEGER) lie on the Cytoplasmic side of the membrane.

The protein belongs to the amino acid-polyamine-organocation (APC) superfamily. Cationic amino acid transporter (CAT) (TC 2.A.3.3) family. Expressed in roots, stems, flowers and leaves. Mostly present in young and rapidly dividing tissues such as the shoot and root apical meristem, and in young leaves and petioles during seedling development.

The protein localises to the cell membrane. Permease involved in the transport of the cationic neutral or acidic amino acids. This chain is Cationic amino acid transporter 8, vacuolar (CAT8), found in Arabidopsis thaliana (Mouse-ear cress).